The sequence spans 611 residues: Chaperone protein HscA (611 aa).

Belongs to the heat shock protein 70 family.

Its function is as follows. Chaperone involved in the maturation of iron-sulfur cluster-containing proteins. Has a low intrinsic ATPase activity which is markedly stimulated by HscB. Involved in the maturation of IscU. The protein is Chaperone protein HscA of Buchnera aphidicola subsp. Acyrthosiphon pisum (strain 5A).